We begin with the raw amino-acid sequence, 225 residues long: uncharacterized protein (225 aa).

Transmembrane regions (helical) follow at residues 25 to 45, 57 to 77, 83 to 103, 109 to 129, 135 to 155, and 187 to 207; these read MMLALALIASFVSHFISIPFL, VFLIACAFFVSYSWALVITVA, FIWDGNNWIGILTLTIANFAI, LYFHIFAQIKLRWLWVFSLAT, LLTTLNGLLITPLYWYWFGYV, and IFALYSLFNVIKFTLVSLIGV.

It localises to the cell membrane. This is an uncharacterized protein from Mycoplasma pneumoniae (strain ATCC 29342 / M129 / Subtype 1) (Mycoplasmoides pneumoniae).